We begin with the raw amino-acid sequence, 211 residues long: Urease accessory protein UreG (211 aa).

11–18 (GPVGAGKT) is a GTP binding site.

This sequence belongs to the SIMIBI class G3E GTPase family. UreG subfamily. Homodimer. UreD, UreF and UreG form a complex that acts as a GTP-hydrolysis-dependent molecular chaperone, activating the urease apoprotein by helping to assemble the nickel containing metallocenter of UreC. The UreE protein probably delivers the nickel.

It is found in the cytoplasm. Facilitates the functional incorporation of the urease nickel metallocenter. This process requires GTP hydrolysis, probably effectuated by UreG. In Actinobacillus pleuropneumoniae serotype 5b (strain L20), this protein is Urease accessory protein UreG.